The sequence spans 204 residues: Ribosome maturation factor RimP (204 aa).

The tract at residues 176-204 (GNFDESQFDEIEESEGEEADEAEQPPTKH) is disordered. The segment covering 181-198 (SQFDEIEESEGEEADEAE) has biased composition (acidic residues).

This sequence belongs to the RimP family.

The protein resides in the cytoplasm. Required for maturation of 30S ribosomal subunits. The polypeptide is Ribosome maturation factor RimP (Cereibacter sphaeroides (strain KD131 / KCTC 12085) (Rhodobacter sphaeroides)).